Reading from the N-terminus, the 486-residue chain is Protein ZINC INDUCED FACILITATOR 1 (486 aa).

Helical transmembrane passes span 41 to 61 (FVWI…PFLY), 82 to 102 (FVGC…GIVA), 109 to 129 (PIIL…GLSS), 131 to 151 (FWMA…LGTM), 170 to 190 (AVST…GFLA), 212 to 232 (ALPC…CCFI), 288 to 308 (IIVY…FALW), 327 to 347 (TVLA…YPLA), 362 to 384 (ALMI…SLSL), 391 to 408 (ILIN…LILQ), 423 to 443 (IAMT…GILF), and 461 to 481 (VFFV…KPFL).

This sequence belongs to the major facilitator superfamily. In terms of tissue distribution, strongly expressed in developing leaves, differentiating zones of root tips and sepals of developing flowers. Restricted to vascular tissues in older leaves, mature roots, flowers, anthers and filaments. Not expressed in developing anthers.

The protein resides in the vacuole membrane. Functionally, major facilitator superfamily (MFS) transporter involved in zinc tolerance by participating in vacuolar sequestration of zinc. This Arabidopsis thaliana (Mouse-ear cress) protein is Protein ZINC INDUCED FACILITATOR 1 (ZIF1).